The primary structure comprises 505 residues: Glutamate--tRNA ligase (505 aa).

The 'HIGH' region motif lies at 12–22; sequence PSPTGALHIGG. Positions 260 to 264 match the 'KMSKS' region motif; sequence KLSKR. Residue lysine 263 participates in ATP binding.

Belongs to the class-I aminoacyl-tRNA synthetase family. Glutamate--tRNA ligase type 1 subfamily. In terms of assembly, monomer.

The protein resides in the cytoplasm. It carries out the reaction tRNA(Glu) + L-glutamate + ATP = L-glutamyl-tRNA(Glu) + AMP + diphosphate. Its function is as follows. Catalyzes the attachment of glutamate to tRNA(Glu) in a two-step reaction: glutamate is first activated by ATP to form Glu-AMP and then transferred to the acceptor end of tRNA(Glu). This chain is Glutamate--tRNA ligase, found in Phocaeicola vulgatus (strain ATCC 8482 / DSM 1447 / JCM 5826 / CCUG 4940 / NBRC 14291 / NCTC 11154) (Bacteroides vulgatus).